The chain runs to 469 residues: Mitochondrial-processing peptidase subunit beta (469 aa).

Residue His-78 coordinates Zn(2+). The Proton acceptor role is filled by Glu-81. Zn(2+) is bound by residues His-82 and Glu-159.

The protein belongs to the peptidase M16 family. As to quaternary structure, heterodimer of alpha and beta subunits, forming the mitochondrial processing protease (MPP) in which subunit alpha is involved in substrate recognition and binding and subunit beta is the catalytic subunit. mppB is probably also part of the cytochrome bc1 complex as a core I protein in the mitochondrial inner membrane. Requires Zn(2+) as cofactor.

It localises to the mitochondrion inner membrane. The protein localises to the mitochondrion matrix. It catalyses the reaction Release of N-terminal transit peptides from precursor proteins imported into the mitochondrion, typically with Arg in position P2.. Its activity is regulated as follows. Binding to alpha subunit is required for catalytic activity. Its function is as follows. Catalytic subunit of the essential mitochondrial processing protease (MPP), which cleaves the mitochondrial sequence off newly imported precursors proteins. Preferentially, cleaves after an arginine at position P2. Plays an essential role in mitochondrial biogenesis. In Dictyostelium discoideum (Social amoeba), this protein is Mitochondrial-processing peptidase subunit beta (mppB).